The chain runs to 1679 residues: [F-actin]-monooxygenase mical2b (1679 aa).

The segment at 2-494 (GETEEERTSQ…RHLFISGEQD (493 aa)) is monooxygenase domain. FAD is bound by residues C97, 97–125 (CGFR…SRNN), E116, R118, R123, N125, and D398. A Calponin-homology (CH) domain is found at 516–619 (EVRPGRLLLW…MVLYLSKFYE (104 aa)). The Nuclear localization signal motif lies at 658-679 (RKRIPKLDKKLEESDVNRKRKK). 8 disordered regions span residues 661–772 (IPKL…KAKW), 818–838 (SAYK…TPTL), 874–907 (SSLF…ESST), 1073–1163 (STRH…RSTA), 1194–1247 (KPED…DEIP), 1259–1283 (EYPK…ISFS), 1302–1342 (DLTN…PAPP), and 1473–1509 (RNKA…KKKE). Composition is skewed to basic and acidic residues over residues 662–674 (PKLD…SDVN) and 697–707 (GEREEQKENKV). Residues 874–888 (SSLFTGNPAQPQTDE) are compositionally biased toward polar residues. Residues 1011-1073 (DTCVFCQKRV…KMHFSQRKTS (63 aa)) enclose the LIM zinc-binding domain. Low complexity predominate over residues 1086-1099 (IRSSSITISNHTST). Over residues 1112–1123 (DSSTQQDLQTLP) the composition is skewed to polar residues. The segment covering 1133–1143 (EVKDSSKKADP) has biased composition (basic and acidic residues). Positions 1144–1154 (ADSAPACPDSP) are enriched in low complexity. Positions 1202 to 1211 (LAEEDGNSDF) are enriched in acidic residues. Positions 1220–1242 (SKKPSNPSTDSNCLPTKDNSSTP) are enriched in polar residues. A compositionally biased stretch (low complexity) spans 1259–1270 (EYPKPSSSSPEP). Over residues 1302–1325 (DLTNPGKSGAEEQQQQHVKPSISL) the composition is skewed to polar residues. Residues 1333–1342 (THPQPEPAPP) are compositionally biased toward pro residues. Low complexity predominate over residues 1475 to 1489 (KASAQQQQQQKSNSS). One can recognise a bMERB domain in the interval 1517-1667 (KSDELKRLHR…EKAEDRDLES (151 aa)).

The protein belongs to the Mical family. Requires FAD as cofactor.

Its subcellular location is the nucleus. It localises to the cytoplasm. It catalyses the reaction L-methionyl-[F-actin] + NADPH + O2 + H(+) = L-methionyl-(R)-S-oxide-[F-actin] + NADP(+) + H2O. In terms of biological role, nuclear monooxygenase that promotes depolymerization of F-actin by mediating oxidation of specific methionine residues on actin and regulates the srf signaling. Acts by modifying nuclear actin subunits through the addition of oxygen to form methionine-sulfoxide, leading to promote actin filament severing and prevent repolymerization. Acts as a key regulator of the srf signaling pathway elicited by nerve growth factor and serum: mediates oxidation and subsequent depolymerization of nuclear actin, leading to increase mkl1/mrtf-a presence in the nucleus and promote srf:mkl1/mrtf-a-dependent gene transcription. In Danio rerio (Zebrafish), this protein is [F-actin]-monooxygenase mical2b.